We begin with the raw amino-acid sequence, 158 residues long: MAEVGSKSVLFVCLGNICRSPIAEAVFRKLVTDENVSDNWRIDSAATSTYEVGNPPDYRGQNCMKKHGIHMQHIARQITREDFATFDYILCMDESNLRDLNRKSNQVKNCKAKIELLGSYDPQKQLIIEDPYYGNDSDFEVVYQQCLRCCKAFLEKTH.

Residue Ala2 is modified to N-acetylalanine. The active-site Nucleophile is Cys13. The active site involves Arg19. Asp130 (proton donor) is an active-site residue. Phosphotyrosine occurs at positions 132 and 133.

Belongs to the low molecular weight phosphotyrosine protein phosphatase family. In terms of assembly, interacts with EPHA2; dephosphorylates EPHA2. Interacts with EPHB1. Interacts with the SH3 domain of SPTAN1. There is no interaction observed for isoform 2. Phosphorylated by LCK. Phosphorylation at Tyr-132 increases its phosphatase activity.

Its subcellular location is the cytoplasm. It catalyses the reaction O-phospho-L-tyrosyl-[protein] + H2O = L-tyrosyl-[protein] + phosphate. It carries out the reaction a phosphate monoester + H2O = an alcohol + phosphate. Inhibited by sulfhydryl reagents. Acts on tyrosine phosphorylated proteins, low-MW aryl phosphates and natural and synthetic acyl phosphates with differences in substrate specificity between isoform 1 and isoform 2. This chain is Low molecular weight phosphotyrosine protein phosphatase, found in Rattus norvegicus (Rat).